The sequence spans 109 residues: Gliadoralin-A (109 aa).

Positions 1–16 (MLVILLMVVVLALSSA) are cleaved as a signal peptide. Q17 carries the pyrrolidone carboxylic acid modification. The tract at residues 17-109 (QDPNRDFVVS…PRYQQPRRAV (93 aa)) is disordered. The span at 35–109 (PSSQQGTVGG…PRYQQPRRAV (75 aa)) shows a compositional bias: low complexity. Positions 107-109 (RAV) are excised as a propeptide.

Predominantly proteolytically processed at its C-terminus before secretion to produce the major form gliadoralin A 1-90. Further proteloytically processed after secretion to produce minor forms. Potential substrate of transglutaminase. In terms of tissue distribution, found in saliva (at protein level). Secreted from the submandibular gland.

It is found in the secreted. Functionally, may play a role in the formation of the protective mucosal protein pellicle involved in the reinforcement and protection of oral mucosal epithelial surface. The polypeptide is Gliadoralin-A (Rattus norvegicus (Rat)).